The primary structure comprises 2245 residues: Myosin-J heavy chain (2245 aa).

A Myosin N-terminal SH3-like domain is found at 25-77; the sequence is QEGAGVWIPDQELGWIGADVIEHSETSADQVLVRTEDDREVKIPLSKVFQKNP. Residues 81 to 821 form the Myosin motor domain; it reads EGVDDLSFLS…QLASLEDMRL (741 aa). 174 to 181 lines the ATP pocket; that stretch reads GESGAGKT. The segment at 646-672 is disordered; it reads FTQSPGGHPQGNGGPTSSNTKGTSGSS. Positions 660-672 are enriched in low complexity; sequence PTSSNTKGTSGSS. Positions 669–749 are actin-binding; sequence SGSSSMKFLS…GFPTRRLLSE (81 aa). IQ domains follow at residues 824-851, 872-901, and 943-972; these read LDRSATVIQKRWKGYLYRKRYKQLRDAS, RTHSAILIQKVWRAHRDRVQYQKIRDASLQ, and KLRGIILIQARWRMKLAKRVYIQLRAEARS. Residues 973–1812 adopt a coiled-coil conformation; sequence LRTVQEQKNK…NYHMLEDRME (840 aa). The disordered stretch occupies residues 1504–1524; that stretch reads KKQLTQLQQQHEQSSTQLLLA. Low complexity predominate over residues 1506 to 1523; it reads QLTQLQQQHEQSSTQLLL. The 220-residue stretch at 1969-2188 folds into the Dilute domain; that stretch reads IDFIDQLQQS…IASICPPNKS (220 aa).

The protein belongs to the TRAFAC class myosin-kinesin ATPase superfamily. Myosin family. As to quaternary structure, homodimer that associates with six light chains.

It is found in the contractile vacuole. Its function is as follows. Processive motor protein that can move over long distances along F-actin without disassociating; processiveness depends on high physiological Mg(2+) concentrations. Presents a high actin affinity in the presence of ADP, fast ATP hydrolysis, and a high steady-state ATPase activity in the presence of actin that is rate limited by ADP release. Physiological decrease of free Mg(2+) ions leads to an increased rate of ADP release and shortening of the fraction of time it spends in the strong acting binding states. The chain is Myosin-J heavy chain (myoJ) from Dictyostelium discoideum (Social amoeba).